Reading from the N-terminus, the 328-residue chain is Sulfate adenylyltransferase subunit 2 (328 aa).

The tract at residues 309–328 (RAIDKDQTASMEKKKQEGYF) is disordered.

The protein belongs to the PAPS reductase family. CysD subfamily. As to quaternary structure, heterodimer composed of CysD, the smaller subunit, and CysN.

The enzyme catalyses sulfate + ATP + H(+) = adenosine 5'-phosphosulfate + diphosphate. Its pathway is sulfur metabolism; hydrogen sulfide biosynthesis; sulfite from sulfate: step 1/3. Functionally, with CysN forms the ATP sulfurylase (ATPS) that catalyzes the adenylation of sulfate producing adenosine 5'-phosphosulfate (APS) and diphosphate, the first enzymatic step in sulfur assimilation pathway. APS synthesis involves the formation of a high-energy phosphoric-sulfuric acid anhydride bond driven by GTP hydrolysis by CysN coupled to ATP hydrolysis by CysD. The chain is Sulfate adenylyltransferase subunit 2 from Hyphomonas neptunium (strain ATCC 15444).